Reading from the N-terminus, the 692-residue chain is Ena/VASP-like protein (692 aa).

Positions 1-112 constitute a WH1 domain; sequence MSEQSICQAR…NAMLFALNIM (112 aa). Disordered stretches follow at residues 116–310, 466–518, and 531–650; these read DGGP…VQKN, SAAM…YEES, and KLRK…NDVS. Composition is skewed to polar residues over residues 123 to 132 and 159 to 169; these read RQAQNIQNGP and STTVSTLQINV. The segment covering 214 to 226 has biased composition (low complexity); sequence SSKSTNKSSNRTS. Polar residues predominate over residues 231-267; sequence LQNSHCGSEPSTSQSSAFSPIRPSNGTVSRSIKQISL. Composition is skewed to low complexity over residues 288-310 and 466-479; these read PSLS…VQKN and SAAM…APAP. A compositionally biased stretch (pro residues) spans 480–506; sequence ASGPPPPPPPGPPPPSGGTPPPAPPLP. Residues 522–542 form an EVH2 block A region; the sequence is GLAAALAGAKLRKVQRPEDGS. The tract at residues 522-689 is EVH2; it reads GLAAALAGAK…DAIRQELSRI (168 aa). Positions 531 to 534 match the KLKR motif; it reads KLRK. Positions 563–580 are EVH2 block B; that stretch reads GGLMEEMNKLLAKRRKAA. The segment covering 597 to 617 has biased composition (polar residues); the sequence is EDASLSSSPVTRGPTPQNSSD. A compositionally biased stretch (basic and acidic residues) spans 618 to 628; it reads LGKKPWERSNS. The interval 655–689 is EVH2 block C; that stretch reads DFDRMKQEILEEVVRELHKVKEEIIDAIRQELSRI.

It belongs to the Ena/VASP family. In terms of tissue distribution, during embryonic and tadpole development, expressed in the cement gland, brain, neural tube, myotome and neural placodes, including the otic, lateral line and olfactory placodes. All isoforms show similar spatial expression patterns.

The protein localises to the cytoplasm. It is found in the cytoskeleton. It localises to the stress fiber. The protein resides in the cell projection. Its subcellular location is the lamellipodium. Functionally, ena/VASP proteins are actin-associated proteins involved in a range of processes dependent on cytoskeleton remodeling and cell polarity such as axon guidance and lamellipodial and filopodial dynamics in migrating cells. Evl enhances actin nucleation and polymerization. The chain is Ena/VASP-like protein from Xenopus laevis (African clawed frog).